A 426-amino-acid polypeptide reads, in one-letter code: Enolase (426 aa).

Glutamine 163 is a (2R)-2-phosphoglycerate binding site. Glutamate 205 serves as the catalytic Proton donor. Positions 242, 283, and 310 each coordinate Mg(2+). Positions 335, 364, 365, and 386 each coordinate (2R)-2-phosphoglycerate. Lysine 335 serves as the catalytic Proton acceptor.

Belongs to the enolase family. Mg(2+) serves as cofactor.

The protein localises to the cytoplasm. It is found in the secreted. The protein resides in the cell surface. The enzyme catalyses (2R)-2-phosphoglycerate = phosphoenolpyruvate + H2O. The protein operates within carbohydrate degradation; glycolysis; pyruvate from D-glyceraldehyde 3-phosphate: step 4/5. Catalyzes the reversible conversion of 2-phosphoglycerate (2-PG) into phosphoenolpyruvate (PEP). It is essential for the degradation of carbohydrates via glycolysis. The sequence is that of Enolase from Beutenbergia cavernae (strain ATCC BAA-8 / DSM 12333 / CCUG 43141 / JCM 11478 / NBRC 16432 / NCIMB 13614 / HKI 0122).